Here is a 539-residue protein sequence, read N- to C-terminus: Chaperonin GroEL (539 aa).

ATP contacts are provided by residues 29 to 32 (TLGP), 86 to 90 (DGTTT), G413, 476 to 478 (NAA), and D492.

Belongs to the chaperonin (HSP60) family. As to quaternary structure, forms a cylinder of 14 subunits composed of two heptameric rings stacked back-to-back. Interacts with the co-chaperonin GroES.

It is found in the cytoplasm. It catalyses the reaction ATP + H2O + a folded polypeptide = ADP + phosphate + an unfolded polypeptide.. Functionally, together with its co-chaperonin GroES, plays an essential role in assisting protein folding. The GroEL-GroES system forms a nano-cage that allows encapsulation of the non-native substrate proteins and provides a physical environment optimized to promote and accelerate protein folding. The polypeptide is Chaperonin GroEL (Parageobacillus thermoglucosidasius (Geobacillus thermoglucosidasius)).